We begin with the raw amino-acid sequence, 447 residues long: Phosphoglucosamine mutase (447 aa).

Ser-88 functions as the Phosphoserine intermediate in the catalytic mechanism. Positions 88, 231, 233, and 235 each coordinate Mg(2+). Ser-88 carries the phosphoserine modification.

It belongs to the phosphohexose mutase family. Monomer. Also forms large aggregates. It depends on Mg(2+) as a cofactor. Post-translationally, activated by phosphorylation. Glucose-1,6-bisphosphate or fructose-1,6-bisphosphate can activate the enzyme in vitro. However, since glucose-1,6-bisphosphate is not believed to form in methanogens, the physiologically relevant activator might be a serine kinase protein.

It catalyses the reaction alpha-D-glucosamine 1-phosphate = D-glucosamine 6-phosphate. In terms of biological role, catalyzes the conversion of glucosamine-6-phosphate to glucosamine-1-phosphate. Also catalyzes the isomerization of glucose-1-phosphate to glucose-6-phosphate, but at a 5-fold lower rate. The chain is Phosphoglucosamine mutase (glmM) from Methanococcus maripaludis (strain DSM 14266 / JCM 13030 / NBRC 101832 / S2 / LL).